Here is a 583-residue protein sequence, read N- to C-terminus: Arginine--tRNA ligase (583 aa).

The 'HIGH' region motif lies at 121–131; sequence ANPTGPLHLGH.

It belongs to the class-I aminoacyl-tRNA synthetase family. As to quaternary structure, monomer.

Its subcellular location is the cytoplasm. It carries out the reaction tRNA(Arg) + L-arginine + ATP = L-arginyl-tRNA(Arg) + AMP + diphosphate. This is Arginine--tRNA ligase (argS) from Aquifex aeolicus (strain VF5).